Consider the following 147-residue polypeptide: MAGKVVMYTDGACKGNPGPGGWGVVLRYGDACKTMHGGELQTTNNRMELMAAIRGLRELKRACQVELYTDSQYVRKGITEWMSGWKRNGWKTSAKKPVKNADLWQELDAETARHTVNWHWVKGHSGHPDNELADELANRGVRELNGA.

The RNase H type-1 domain occupies 1-142 (MAGKVVMYTD…ADELANRGVR (142 aa)). Mg(2+) contacts are provided by Asp-10, Glu-48, Asp-70, and Asp-134.

It belongs to the RNase H family. As to quaternary structure, monomer. It depends on Mg(2+) as a cofactor.

Its subcellular location is the cytoplasm. The catalysed reaction is Endonucleolytic cleavage to 5'-phosphomonoester.. In terms of biological role, endonuclease that specifically degrades the RNA of RNA-DNA hybrids. In Marinobacter nauticus (strain ATCC 700491 / DSM 11845 / VT8) (Marinobacter aquaeolei), this protein is Ribonuclease H.